The sequence spans 60 residues: Sec-independent protein translocase protein TatA (60 aa).

The helical transmembrane segment at 1 to 21 (MLSNIGVPGLILILVIALVIF) threads the bilayer.

It belongs to the TatA/E family. As to quaternary structure, forms a complex with TatC.

It is found in the cell membrane. Functionally, part of the twin-arginine translocation (Tat) system that transports large folded proteins containing a characteristic twin-arginine motif in their signal peptide across membranes. TatA could form the protein-conducting channel of the Tat system. The protein is Sec-independent protein translocase protein TatA of Anoxybacillus flavithermus (strain DSM 21510 / WK1).